We begin with the raw amino-acid sequence, 169 residues long: Peptide methionine sulfoxide reductase MsrA (169 aa).

The active site involves C10.

It belongs to the MsrA Met sulfoxide reductase family.

It catalyses the reaction L-methionyl-[protein] + [thioredoxin]-disulfide + H2O = L-methionyl-(S)-S-oxide-[protein] + [thioredoxin]-dithiol. The catalysed reaction is [thioredoxin]-disulfide + L-methionine + H2O = L-methionine (S)-S-oxide + [thioredoxin]-dithiol. In terms of biological role, has an important function as a repair enzyme for proteins that have been inactivated by oxidation. Catalyzes the reversible oxidation-reduction of methionine sulfoxide in proteins to methionine. This Streptococcus pyogenes serotype M2 (strain MGAS10270) protein is Peptide methionine sulfoxide reductase MsrA.